The sequence spans 330 residues: Peptide transport system ATP-binding protein SapD (330 aa).

An ABC transporter domain is found at 6-259 (IRNLTIEFKT…PHHPYTQALI (254 aa)). 40-47 (GESGSGKS) lines the ATP pocket.

Belongs to the ABC transporter superfamily.

It is found in the cell inner membrane. Its function is as follows. Involved in a peptide intake transport system that plays a role in the resistance to antimicrobial peptides. The polypeptide is Peptide transport system ATP-binding protein SapD (sapD) (Escherichia coli O157:H7).